The chain runs to 301 residues: Acetylglutamate kinase (301 aa).

Substrate is bound by residues 76-77 (GG), arginine 98, and asparagine 192.

Belongs to the acetylglutamate kinase family. ArgB subfamily.

The protein localises to the cytoplasm. It carries out the reaction N-acetyl-L-glutamate + ATP = N-acetyl-L-glutamyl 5-phosphate + ADP. It participates in amino-acid biosynthesis; L-arginine biosynthesis; N(2)-acetyl-L-ornithine from L-glutamate: step 2/4. Its function is as follows. Catalyzes the ATP-dependent phosphorylation of N-acetyl-L-glutamate. The protein is Acetylglutamate kinase of Chlorobaculum parvum (strain DSM 263 / NCIMB 8327) (Chlorobium vibrioforme subsp. thiosulfatophilum).